The chain runs to 369 residues: Anhydro-N-acetylmuramic acid kinase (369 aa).

12-19 is a binding site for ATP; the sequence is GTSLDGVD.

Belongs to the anhydro-N-acetylmuramic acid kinase family.

It catalyses the reaction 1,6-anhydro-N-acetyl-beta-muramate + ATP + H2O = N-acetyl-D-muramate 6-phosphate + ADP + H(+). It functions in the pathway amino-sugar metabolism; 1,6-anhydro-N-acetylmuramate degradation. Its pathway is cell wall biogenesis; peptidoglycan recycling. Catalyzes the specific phosphorylation of 1,6-anhydro-N-acetylmuramic acid (anhMurNAc) with the simultaneous cleavage of the 1,6-anhydro ring, generating MurNAc-6-P. Is required for the utilization of anhMurNAc either imported from the medium or derived from its own cell wall murein, and thus plays a role in cell wall recycling. This chain is Anhydro-N-acetylmuramic acid kinase, found in Shigella boydii serotype 4 (strain Sb227).